Reading from the N-terminus, the 143-residue chain is UPF0299 membrane protein CGSHiEE_04225 (143 aa).

The next 4 helical transmembrane spans lie at 1-21 (MIQK…MLSL), 33-52 (VPGS…TRVI), 60-80 (GASL…VGII), and 92-112 (ILLV…GFLG).

Belongs to the UPF0299 family.

The protein resides in the cell inner membrane. The sequence is that of UPF0299 membrane protein CGSHiEE_04225 from Haemophilus influenzae (strain PittEE).